Here is a 153-residue protein sequence, read N- to C-terminus: CASP-like protein 5B1 (153 aa).

Topologically, residues 1–20 (MRELAGSPGTWSGLSLRVGQ) are cytoplasmic. Residues 21–41 (LVFAAASVCATASALGFAAYT) traverse the membrane as a helical segment. Residue alanine 42 is a topological domain, extracellular. The helical transmembrane segment at 43 to 63 (FCYLIASMGLQALWSLGLACL) threads the bilayer. Residues 64–76 (DCYALKFKKDLHS) lie on the Cytoplasmic side of the membrane. The helical transmembrane segment at 77-97 (AVLLSLFVVGDWVTAILSFAA) threads the bilayer. Topologically, residues 98-128 (SCSAAGVVVLFDRDIYACRNPQLPCGRFELA) are extracellular. A helical transmembrane segment spans residues 129-149 (IACAFLSWAFSATSALVMFWL). Over 150–153 (LASL) the chain is Cytoplasmic.

Belongs to the Casparian strip membrane proteins (CASP) family. Homodimer and heterodimers.

Its subcellular location is the cell membrane. The protein is CASP-like protein 5B1 of Oryza sativa subsp. indica (Rice).